The chain runs to 25 residues: Plasticin-L1 (25 aa).

This sequence belongs to the frog skin active peptide (FSAP) family. Plasticin subfamily. In terms of tissue distribution, expressed by the skin glands.

The protein resides in the secreted. It localises to the target cell membrane. Its function is as follows. May play an immunomodulatory role in frog skin in response to microbial pathogens, since it increases the production of the pro-inflammatory cytokines TNF-alpha, IL-1 beta, IL-12, and IL-23 by mouse peritoneal macrophages and has no effect on the production of the anti-inflammatory cytokine IL-10. It is not known whether stimulation of cytokine production arises from a non-specific interaction of the peptide with the macrophage membrane or from interaction with a specific receptor. Shows a low activity in stimulating insulin release from rat BRIN-BD11 beta cells, and acts without loss of integrity of the plasma membrane. Shows a marked affinity for both neutral and anionic membranes models. Does not show antibacterial (E.coli and S.aureus). Does not show hemolytic activity against human erythrocytes. The polypeptide is Plasticin-L1 (Leptodactylus laticeps (Santa Fe frog)).